The primary structure comprises 300 residues: GTPase Era (300 aa).

One can recognise an Era-type G domain in the interval 5-172 (HSGFVAIIGR…LTALTDALPV (168 aa)). The interval 13–20 (GRPNVGKS) is G1. 13 to 20 (GRPNVGKS) contributes to the GTP binding site. A G2 region spans residues 39-43 (QTTRN). The segment at 60 to 63 (DTPG) is G3. GTP contacts are provided by residues 60 to 64 (DTPGI) and 122 to 125 (NKID). A G4 region spans residues 122-125 (NKID). Residues 151–153 (ISA) are G5. The 78-residue stretch at 203–280 (TRDEVPHAVA…NLKLWVRVQK (78 aa)) folds into the KH type-2 domain.

It belongs to the TRAFAC class TrmE-Era-EngA-EngB-Septin-like GTPase superfamily. Era GTPase family. As to quaternary structure, monomer.

Its subcellular location is the cytoplasm. It is found in the cell membrane. In terms of biological role, an essential GTPase that binds both GDP and GTP, with rapid nucleotide exchange. Plays a role in 16S rRNA processing and 30S ribosomal subunit biogenesis and possibly also in cell cycle regulation and energy metabolism. This chain is GTPase Era, found in Lacticaseibacillus paracasei (strain ATCC 334 / BCRC 17002 / CCUG 31169 / CIP 107868 / KCTC 3260 / NRRL B-441) (Lactobacillus paracasei).